A 442-amino-acid polypeptide reads, in one-letter code: Enolase 1 (442 aa).

A binds human collagen region spans residues 73–140 (KLIAKEIVGY…YNYLGGFNAH (68 aa)). Residue Q163 coordinates (2R)-2-phosphoglycerate. E205 acts as the Proton donor in catalysis. Mg(2+) contacts are provided by D242, E290, and D317. K342, R371, S372, and K393 together coordinate (2R)-2-phosphoglycerate. K342 serves as the catalytic Proton acceptor.

Belongs to the enolase family. The cofactor is Mg(2+).

The protein localises to the cytoplasm. It is found in the secreted. The protein resides in the cell surface. It catalyses the reaction (2R)-2-phosphoglycerate = phosphoenolpyruvate + H2O. It functions in the pathway carbohydrate degradation; glycolysis; pyruvate from D-glyceraldehyde 3-phosphate: step 4/5. In terms of biological role, catalyzes the reversible conversion of 2-phosphoglycerate (2-PG) into phosphoenolpyruvate (PEP). It is essential for the degradation of carbohydrates via glycolysis. 'Moonlights' as a collagen receptor. Binds host (human) collagen, which may contribute to pathogenicity. The sequence is that of Enolase 1 from Lactiplantibacillus plantarum (strain ATCC BAA-793 / NCIMB 8826 / WCFS1) (Lactobacillus plantarum).